Reading from the N-terminus, the 1792-residue chain is Non-reducing polyketide synthase aptA (1792 aa).

Positions 1-395 (MKDNTHSTTL…PRSFAHSKLA (395 aa)) are N-terminal acylcarrier protein transacylase domain (SAT). A Ketosynthase family 3 (KS3) domain is found at 391 to 824 (HSKLAVVGMA…GGNTTVLLED (434 aa)). Catalysis depends on for beta-ketoacyl synthase activity residues Cys564, His699, and His742. The malonyl-CoA:ACP transacylase (MAT) domain stretch occupies residues 926–1243 (VFAFTGQGAF…NLVALHLAGC (318 aa)). The segment at 1308-1625 (TSLIHEIIEE…PRLLMDRFFS (318 aa)) is product template (PT) domain. The N-terminal hotdog fold stretch occupies residues 1312-1447 (HEIIEETIGE…GSVRFEADAE (136 aa)). The region spanning 1312–1621 (HEIIEETIGE…FRRVPRLLMD (310 aa)) is the PKS/mFAS DH domain. His1344 serves as the catalytic Proton acceptor; for dehydratase activity. A C-terminal hotdog fold region spans residues 1475–1621 (QASQLSKALS…FRRVPRLLMD (147 aa)). The active-site Proton donor; for dehydratase activity is Asp1533. Residues 1634–1649 (VAASASSAPKTATKHA) are compositionally biased toward low complexity. Residues 1634-1716 (VAASASSAPK…GPNGTTSQPE (83 aa)) form a disordered region. The segment covering 1664–1684 (TPSSLPTVQAQNTSPPQQVTP) has biased composition (polar residues). Positions 1694 to 1705 (TPEEEKPGKADA) are enriched in basic and acidic residues. The Carrier domain maps to 1715 to 1792 (PEATGVVGQC…DMMDWLEQYC (78 aa)). An O-(pantetheine 4'-phosphoryl)serine modification is found at Ser1752.

Pantetheine 4'-phosphate serves as cofactor.

It carries out the reaction holo-[ACP] + 8 malonyl-CoA + acetyl-CoA + 8 H(+) = 3,6,8,9-tetrahydroxy-1-oxo-3-(2-oxopropyl)-1,2,3,4-tetrahydroanthracene-2-carboxyl-[ACP] + 8 CO2 + 9 CoA + 2 H2O. The protein operates within secondary metabolite biosynthesis. In terms of biological role, non-reducing polyketide synthase (NRPKS); part of the gene cluster that mediates the biosynthesis of asperthecin, an anthraquinone pigment. Catalyzes the formation of the aromatic polyketide from acetyl coenzyme A and seven malonyl coenzyme A molecules. Through its product template (PT) domain, catalyzes the cyclization of the polyketide backbone via C6-C11 aldolcondensation. Polyketide is subsequently hydrolyzed from the NRPKS by the action of the hydrolase aptB into endocrocin-9-anthrone. Endocrocin-9-anthrone is then oxidized into endocrocin by aptC. Endocrocin is likely to decarboxylate spontaneously to form emodin which explains why there is no decarboxylase in the asperthecin biosynthesis cluster. Finally, aptC or another endogenous oxygenase catalyzes additional oxidation steps to form asperthecin. This chain is Non-reducing polyketide synthase aptA, found in Emericella nidulans (strain FGSC A4 / ATCC 38163 / CBS 112.46 / NRRL 194 / M139) (Aspergillus nidulans).